A 76-amino-acid chain; its full sequence is Acyl carrier protein (76 aa).

The 76-residue stretch at 1–76 folds into the Carrier domain; sequence MALLDDVKAV…DAIKYIENNA (76 aa). S36 is subject to O-(pantetheine 4'-phosphoryl)serine.

The protein belongs to the acyl carrier protein (ACP) family. Post-translationally, 4'-phosphopantetheine is transferred from CoA to a specific serine of apo-ACP by AcpS. This modification is essential for activity because fatty acids are bound in thioester linkage to the sulfhydryl of the prosthetic group.

Its subcellular location is the cytoplasm. Its pathway is lipid metabolism; fatty acid biosynthesis. Carrier of the growing fatty acid chain in fatty acid biosynthesis. The sequence is that of Acyl carrier protein from Aliarcobacter butzleri (strain RM4018) (Arcobacter butzleri).